Here is a 510-residue protein sequence, read N- to C-terminus: MRSRRDNSWVVQKFGGTSIGKFPDKVAEIVKSARLGGDRPAVICSARSSGKKVFGTTSRLLQVYRTLRGIVAITQDPDMQELLFDRLRSIIKDIRDDQVATVQIYILRQDIRDETTRQITADCQELLDYTSAAKRFNLDINGKAKDKMVSFGEKLSCRLMVAMLRDRDIPAEYVDLSDIVPNNNLNHLKPEFFPEAAAVFGKRIEACNGRVPVITGFFGAVPGSLIDSGIGRGYSDLCAVLVAIGLHAERVQIWKEVDGIFTADPREVPDARCLPSITPSEAAELTFYGSEVIHHLALSLAIQAKPPISIFVKNVQKPWGQGTVVVPSDGDDTSSWPIDYLDPSDSDCTSSTALPKMPTAVTIKRDITILNILSNKQSMSHGFFVKVFTILAEHDISVDLISTSEVHVSMAINSSNMDPSQIKDVHCKIAEEGEVNVLPDMAILSLVGAELKNMTGIAGRMFAILGEQHVNIEMISQGASEINISCVIPDKDATRALNMLHNELFTKNAM.

ACT domains lie at 372 to 440 (ILSN…VLPD) and 446 to 510 (LVGA…KNAM).

The protein belongs to the aspartokinase family.

The enzyme catalyses L-aspartate + ATP = 4-phospho-L-aspartate + ADP. Its pathway is mycotoxin biosynthesis. Its function is as follows. Aspartate kinase; part of the gene cluster that mediates the biosynthesis of fusaric acid, a mycotoxin with low to moderate toxicity to animals and humans, but with high phytotoxic properties. L-aspartate is suggested as fusaric acid amino acid precursor that is activated and further processed to O-acetyl-L-homoserine by cluster enzymes aspartate kinase FUB3 and homoserine O-acetyltransferase FUB5, as well as enzymes of the primary metabolism. The polyketide synthase (PKS) FUB1 generates the triketide trans-2-hexenal which is presumptively released by the hydrolase FUB4 and linked to the NRPS-bound amino acid precursor by NAD(P)-dependent dehydrogenase FUB6. FUB1, FUB4, and the non-canonical NRPS Fub8 may form an enzyme complex. Further processing of the NRPS-bound intermediate might be carried out by FUB6 and the sulfhydrylase FUB7, enabling a spontaneous electrocyclization to close the carbon backbone of fusaric acid. Dihydrofusaric acid is likely to be released via reduction by the thioester reductase (TR) domain of FUB8 whereupon the final oxidation to fusaric acid may (also) be performed by the FMN-dependent dehydrogenase FUB9. This chain is Aspartate kinase FUB3, found in Gibberella moniliformis (strain M3125 / FGSC 7600) (Maize ear and stalk rot fungus).